The following is an 817-amino-acid chain: Lon protease (817 aa).

The Lon N-terminal domain maps to 22–216; that stretch reads VPIMPLSDGV…KVTRQLNHQL (195 aa). 368–375 is a binding site for ATP; it reads GPPGTGKT. The region spanning 604–785 is the Lon proteolytic domain; the sequence is ALTPGVVMGL…GDVLELALNG (182 aa). Active-site residues include S691 and K734. The tract at residues 784-817 is disordered; the sequence is NGNGATKKKKKTPAKSKKSTKPAAKKTAARKSRK. The segment covering 789–817 has biased composition (basic residues); it reads TKKKKKTPAKSKKSTKPAAKKTAARKSRK.

Belongs to the peptidase S16 family. Homohexamer. Organized in a ring with a central cavity.

The protein resides in the cytoplasm. It catalyses the reaction Hydrolysis of proteins in presence of ATP.. In terms of biological role, ATP-dependent serine protease that mediates the selective degradation of mutant and abnormal proteins as well as certain short-lived regulatory proteins. Required for cellular homeostasis and for survival from DNA damage and developmental changes induced by stress. Degrades polypeptides processively to yield small peptide fragments that are 5 to 10 amino acids long. Binds to DNA in a double-stranded, site-specific manner. The polypeptide is Lon protease (Desulfosudis oleivorans (strain DSM 6200 / JCM 39069 / Hxd3) (Desulfococcus oleovorans)).